Reading from the N-terminus, the 436-residue chain is Histidinol dehydrogenase (436 aa).

The NAD(+) site is built by tyrosine 136, glutamine 198, and asparagine 221. Residues serine 244, glutamine 266, and histidine 269 each coordinate substrate. Glutamine 266 and histidine 269 together coordinate Zn(2+). Active-site proton acceptor residues include glutamate 334 and histidine 335. Substrate-binding residues include histidine 335, aspartate 368, glutamate 422, and histidine 427. Residue aspartate 368 participates in Zn(2+) binding. Residue histidine 427 coordinates Zn(2+).

It belongs to the histidinol dehydrogenase family. Requires Zn(2+) as cofactor.

It catalyses the reaction L-histidinol + 2 NAD(+) + H2O = L-histidine + 2 NADH + 3 H(+). It functions in the pathway amino-acid biosynthesis; L-histidine biosynthesis; L-histidine from 5-phospho-alpha-D-ribose 1-diphosphate: step 9/9. Catalyzes the sequential NAD-dependent oxidations of L-histidinol to L-histidinaldehyde and then to L-histidine. The chain is Histidinol dehydrogenase from Dehalococcoides mccartyi (strain CBDB1).